Here is a 139-residue protein sequence, read N- to C-terminus: Thioredoxin-like protein Clot (139 aa).

The 136-residue stretch at 1–136 (MTVEKVDATV…LADKVDAVVN (136 aa)) folds into the Thioredoxin domain. Residues Cys-49 and Cys-52 each act as nucleophile in the active site. Cysteines 49 and 52 form a disulfide.

It belongs to the thioredoxin family.

Its function is as follows. Probable thiol-disulfide oxidoreductase that may participate in various redox reactions. This is Thioredoxin-like protein Clot from Oryza sativa subsp. japonica (Rice).